The following is an 857-amino-acid chain: Cadherin-related family member 1a (857 aa).

The N-terminal stretch at 1-25 is a signal peptide; that stretch reads MKNAREIQFSSFLLLAHFCFVGAQS. Over 26-709 the chain is Extracellular; the sequence is DYAPYFYDNG…RENPMHFLGL (684 aa). 6 Cadherin domains span residues 40–139, 140–252, 253–359, 365–478, 479–582, and 574–693; these read NGNM…RPQF, QNMP…PPIF, IGTP…PPTF, PQNV…APKF, TSDF…PPAF, and DLND…GPLT. Residues 710–730 traverse the membrane as a helical segment; sequence ISGVILILVFVTVIISTVIFV. The Cytoplasmic portion of the chain corresponds to 731 to 857; that stretch reads RRNKANRILP…LEQKNMANRY (127 aa). The disordered stretch occupies residues 746-765; the sequence is RKKRKPQKQDDFQEPFREEQ. The span at 752 to 765 shows a compositional bias: basic and acidic residues; sequence QKQDDFQEPFREEQ.

Expressed in photoreceptor cells of the outer nuclear layer of the retina and in the pinal gland.

It is found in the membrane. Functionally, potential calcium-dependent cell-adhesion protein. Plays a role in the organization of retinal cell layers and Muller glia morphology. This is Cadherin-related family member 1a from Danio rerio (Zebrafish).